A 473-amino-acid chain; its full sequence is Photosystem II CP43 reaction center protein (473 aa).

Positions 1–14 (MKTLYSLRRFYPVE) are excised as a propeptide. Threonine 15 is subject to N-acetylthreonine. The residue at position 15 (threonine 15) is a Phosphothreonine. 5 helical membrane passes run 69-93 (LFEV…PHLA), 134-155 (LLGP…KDRN), 178-200 (KALY…RKIT), 255-275 (KPFA…LSYS), and 291-312 (WFNN…ASQA). Glutamate 367 provides a ligand contact to [CaMn4O5] cluster. A helical membrane pass occupies residues 447 to 471 (RARAAAAGFEKGIDRDFEPVLFMTP).

Belongs to the PsbB/PsbC family. PsbC subfamily. As to quaternary structure, PSII is composed of 1 copy each of membrane proteins PsbA, PsbB, PsbC, PsbD, PsbE, PsbF, PsbH, PsbI, PsbJ, PsbK, PsbL, PsbM, PsbT, PsbX, PsbY, PsbZ, Psb30/Ycf12, at least 3 peripheral proteins of the oxygen-evolving complex and a large number of cofactors. It forms dimeric complexes. It depends on Binds multiple chlorophylls and provides some of the ligands for the Ca-4Mn-5O cluster of the oxygen-evolving complex. It may also provide a ligand for a Cl- that is required for oxygen evolution. PSII binds additional chlorophylls, carotenoids and specific lipids. as a cofactor.

Its subcellular location is the plastid. The protein localises to the chloroplast thylakoid membrane. One of the components of the core complex of photosystem II (PSII). It binds chlorophyll and helps catalyze the primary light-induced photochemical processes of PSII. PSII is a light-driven water:plastoquinone oxidoreductase, using light energy to abstract electrons from H(2)O, generating O(2) and a proton gradient subsequently used for ATP formation. This is Photosystem II CP43 reaction center protein from Cucumis sativus (Cucumber).